A 550-amino-acid polypeptide reads, in one-letter code: CTP synthase (550 aa).

Positions 1–270 (MTKYVFVTGG…DRIICEELKL (270 aa)) are amidoligase domain. Position 13 (Ser13) interacts with CTP. Residue Ser13 coordinates UTP. ATP contacts are provided by residues 14 to 19 (SLGKGI) and Asp71. Mg(2+)-binding residues include Asp71 and Glu144. CTP is bound by residues 151–153 (DIE), 191–196 (KTKPTQ), and Lys227. UTP-binding positions include 191–196 (KTKPTQ) and Lys227. Residues 295 to 547 (TIGMVGKYVD…VEAALANKQA (253 aa)) enclose the Glutamine amidotransferase type-1 domain. Position 356 (Gly356) interacts with L-glutamine. Residue Cys383 is the Nucleophile; for glutamine hydrolysis of the active site. L-glutamine is bound by residues 384–387 (LGMQ), Glu407, and Arg473. Active-site residues include His520 and Glu522.

This sequence belongs to the CTP synthase family. As to quaternary structure, homotetramer.

It catalyses the reaction UTP + L-glutamine + ATP + H2O = CTP + L-glutamate + ADP + phosphate + 2 H(+). It carries out the reaction L-glutamine + H2O = L-glutamate + NH4(+). The catalysed reaction is UTP + NH4(+) + ATP = CTP + ADP + phosphate + 2 H(+). It functions in the pathway pyrimidine metabolism; CTP biosynthesis via de novo pathway; CTP from UDP: step 2/2. Allosterically activated by GTP, when glutamine is the substrate; GTP has no effect on the reaction when ammonia is the substrate. The allosteric effector GTP functions by stabilizing the protein conformation that binds the tetrahedral intermediate(s) formed during glutamine hydrolysis. Inhibited by the product CTP, via allosteric rather than competitive inhibition. Its function is as follows. Catalyzes the ATP-dependent amination of UTP to CTP with either L-glutamine or ammonia as the source of nitrogen. Regulates intracellular CTP levels through interactions with the four ribonucleotide triphosphates. In Burkholderia lata (strain ATCC 17760 / DSM 23089 / LMG 22485 / NCIMB 9086 / R18194 / 383), this protein is CTP synthase.